A 270-amino-acid polypeptide reads, in one-letter code: Karrikin insensitive 2 receptor CA (270 aa).

Ser-95 functions as the Nucleophile in the catalytic mechanism. Catalysis depends on residues Asp-217 and His-246.

The protein belongs to the AB hydrolase superfamily. As to expression, expressed in stigma.

It localises to the nucleus. The protein resides in the cytoplasm. Functionally, hydrolase which may be involved in plant olfaction during volatile communication. The sequence is that of Karrikin insensitive 2 receptor CA from Petunia hybrida (Petunia).